We begin with the raw amino-acid sequence, 507 residues long: ATP synthase subunit alpha, chloroplastic (507 aa).

170–177 (GDRQTGKT) serves as a coordination point for ATP.

This sequence belongs to the ATPase alpha/beta chains family. In terms of assembly, F-type ATPases have 2 components, CF(1) - the catalytic core - and CF(0) - the membrane proton channel. CF(1) has five subunits: alpha(3), beta(3), gamma(1), delta(1), epsilon(1). CF(0) has four main subunits: a, b, b' and c.

Its subcellular location is the plastid. The protein localises to the chloroplast thylakoid membrane. The enzyme catalyses ATP + H2O + 4 H(+)(in) = ADP + phosphate + 5 H(+)(out). Its function is as follows. Produces ATP from ADP in the presence of a proton gradient across the membrane. The alpha chain is a regulatory subunit. This Spinacia oleracea (Spinach) protein is ATP synthase subunit alpha, chloroplastic.